Reading from the N-terminus, the 72-residue chain is uncharacterized protein (72 aa).

This sequence belongs to the baculoviridae 8 kDa protein family.

This is an uncharacterized protein from Orgyia pseudotsugata (Douglas-fir tussock moth).